The following is a 147-amino-acid chain: Hemoglobin subunit beta (147 aa).

The residue at position 2 (Val-2) is an N-acetylvaline. The region spanning 3 to 147 is the Globin domain; sequence HLTGEEKSAV…VANALAHKYH (145 aa). The residue at position 13 (Thr-13) is a Phosphothreonine. Position 45 is a phosphoserine (Ser-45). Lys-60 carries the post-translational modification N6-acetyllysine. His-64 serves as a coordination point for heme b. Lys-83 carries the N6-acetyllysine modification. Position 93 (His-93) interacts with heme b. Cys-94 bears the S-nitrosocysteine mark. An N6-acetyllysine modification is found at Lys-145.

This sequence belongs to the globin family. In terms of assembly, heterotetramer of two alpha chains and two beta chains. In terms of tissue distribution, red blood cells.

In terms of biological role, involved in oxygen transport from the lung to the various peripheral tissues. The sequence is that of Hemoglobin subunit beta (HBB) from Ateles paniscus (Black spider monkey).